The primary structure comprises 2477 residues: Spectrin alpha chain, non-erythrocytic 1 (2477 aa).

Residues 1-14 (MDPSGVKVLETAED) are N-terminal domain. Spectrin repeat units lie at residues 45-146 (RFQF…VKLL), 150-251 (KLVQ…QGKL), 256-358 (EVQR…ARLN), 361-465 (YRLQ…QYEQ), 468-570 (DLQL…AQLA), 574-676 (HLQQ…KLRE), 679-781 (QQQQ…QKLA), 785-888 (RLQQ…DLED), 891-969 (QAQQ…ETGK), and 1096-1162 (LFRE…SEGL). One can recognise an SH3 domain in the interval 967–1026 (TGKELVLALYDYQEKSPREVTMKKGDILTLLNSTNKDWWKVEVNDRQGFVPAAYVKKLDP). Phosphotyrosine is present on Y1176. Spectrin repeat units follow at residues 1234 to 1336 (EVQR…EKLG), 1339 to 1442 (HDLQ…MMLD), 1446 to 1549 (ELQL…KLGE), 1552 to 1661 (TLQQ…KLKE), 1664 to 1767 (KQQN…KLNE), 1769 to 1873 (HRLH…RLEE), 1876 to 1979 (EYQQ…KLDE), 1983 to 2086 (FLQF…KLLE), 2097 to 2199 (LFLT…LELQ), and 2211 to 2315 (LRQE…NLEQ). The C-terminal domain stretch occupies residues 2257 to 2477 (HQEIRAMRSQ…IEFTRSLFVN (221 aa)). 3 EF-hand domains span residues 2328–2363 (EALKEFSMMFKHFDKDKSGRLNHQEFKSCLRSLGYD), 2371–2406 (EPDPEFESILDTVDPNRDGHVSLQEYMAFMISRETE), and 2409–2444 (KSSEEIESAFRALSSERKPYVTKEELYQNLTREQAD). Ca(2+) is bound by residues D2341, D2343, S2345, R2347, E2352, D2384, N2386, D2388, H2390, and E2395.

It belongs to the spectrin family. Like erythrocyte spectrin, the spectrin-like proteins are capable of forming dimers which can further associate to tetramers. Interacts with ACP1. Phosphorylation of Tyr-1176 decreases sensitivity to cleavage by calpain in vitro.

It localises to the cytoplasm. The protein localises to the cytoskeleton. The protein resides in the cell cortex. Functionally, morphologically, spectrin-like proteins appear to be related to spectrin, showing a flexible rod-like structure. They can bind actin but seem to differ in their calmodulin-binding activity. In nonerythroid tissues, spectrins, in association with some other proteins, may play an important role in membrane organization. This is Spectrin alpha chain, non-erythrocytic 1 (SPTAN1) from Gallus gallus (Chicken).